Consider the following 180-residue polypeptide: Large ribosomal subunit protein uL6 (180 aa).

The segment at 158–180 (YSGKGISYKGEKIRRKEGKTASK) is disordered.

This sequence belongs to the universal ribosomal protein uL6 family. In terms of assembly, part of the 50S ribosomal subunit.

In terms of biological role, this protein binds to the 23S rRNA, and is important in its secondary structure. It is located near the subunit interface in the base of the L7/L12 stalk, and near the tRNA binding site of the peptidyltransferase center. The sequence is that of Large ribosomal subunit protein uL6 from Mycoplasmopsis synoviae (strain 53) (Mycoplasma synoviae).